Reading from the N-terminus, the 161-residue chain is Peroxynitrite isomerase (161 aa).

The GXWXGXG signature appears at 17-23 (GSWVGRG). His152 contributes to the heme b binding site.

Belongs to the nitrobindin family. In terms of assembly, homodimer. It depends on heme b as a cofactor.

The enzyme catalyses peroxynitrite = nitrate. The protein operates within nitrogen metabolism. Its function is as follows. Heme-binding protein able to scavenge peroxynitrite and to protect free L-tyrosine against peroxynitrite-mediated nitration, by acting as a peroxynitrite isomerase that converts peroxynitrite to nitrate. Therefore, this protein likely plays a role in peroxynitrite sensing and in the detoxification of reactive nitrogen and oxygen species (RNS and ROS, respectively). Is able to bind nitric oxide (NO) in vitro, but may act as a sensor of peroxynitrite levels in vivo. This is Peroxynitrite isomerase from Mycobacterium leprae (strain TN).